The sequence spans 282 residues: UDP-3-O-acyl-N-acetylglucosamine deacetylase (282 aa).

Zn(2+) is bound by residues histidine 80, histidine 240, and aspartate 244. Histidine 267 serves as the catalytic Proton donor.

This sequence belongs to the LpxC family. Zn(2+) serves as cofactor.

The protein localises to the plastid. It localises to the chloroplast. It catalyses the reaction a UDP-3-O-[(3R)-3-hydroxyacyl]-N-acetyl-alpha-D-glucosamine + H2O = a UDP-3-O-[(3R)-3-hydroxyacyl]-alpha-D-glucosamine + acetate. The protein operates within glycolipid biosynthesis; lipid IV(A) biosynthesis; lipid IV(A) from (3R)-3-hydroxytetradecanoyl-[acyl-carrier-protein] and UDP-N-acetyl-alpha-D-glucosamine: step 2/6. Functionally, catalyzes the hydrolysis of UDP-3-O-myristoyl-N-acetylglucosamine to form UDP-3-O-myristoylglucosamine and acetate. Involved in the biosynthesis of lipid A, a phosphorylated glycolipid that in bacteria anchors the lipopolysaccharide to the outer membrane of the cell. The target for the lipopolysaccharides produced in the chloroplast could either be the cell envelope of the eukaryote or the plastid membrane. The polypeptide is UDP-3-O-acyl-N-acetylglucosamine deacetylase (Cyanidium caldarium (Red alga)).